A 347-amino-acid chain; its full sequence is MESFASLAGGGSSSTTARLPELIPPENPDRISPPPLLYQLLAGSASSARHGHGHHHGGGGGAAAAAVQGLQVSPAGAEAAMKAEIMSHPQYSALLAAYLGCKKVGAPPDVLTKLTAVPAAQQQLDAADGHPRRRHEPRRDDDVPDHQLDQFMHADEVQGGAGAADPGSRGVLQLDSIADSNCEGTGSSEEEQDTSCPEAEEIDPSDKQLKHQLLMKYGGSLGDLRQAFSKRTKKGKLPKEARLKLLHWWELHYDKWPYPSEVEKMTLAQTTGLDQKQISNWFINQRKRHWKPTPVAGMTFPTVEAAGGGFRHSGHDGGLAAAAAAAALPLYMGSWPFVVDGMYRLGS.

Residues 1-17 (MESFASLAGGGSSSTTA) are compositionally biased toward low complexity. Disordered stretches follow at residues 1 to 36 (MESF…PPPL), 122 to 145 (QQLD…DVPD), and 179 to 206 (DSNC…DPSD). The span at 22–36 (LIPPENPDRISPPPL) shows a compositional bias: pro residues. The span at 188-203 (SEEEQDTSCPEAEEID) shows a compositional bias: acidic residues. The ELK domain maps to 208–228 (QLKHQLLMKYGGSLGDLRQAF). Positions 229–293 (SKRTKKGKLP…NQRKRHWKPT (65 aa)) form a DNA-binding region, homeobox; TALE-type.

It belongs to the TALE/KNOX homeobox family.

The protein localises to the nucleus. The protein is Homeobox protein knotted-1-like 9 of Oryza sativa subsp. japonica (Rice).